A 254-amino-acid polypeptide reads, in one-letter code: Imidazole glycerol phosphate synthase subunit HisF (254 aa).

Residues Asp-12 and Asp-132 contribute to the active site.

The protein belongs to the HisA/HisF family. Heterodimer of HisH and HisF.

The protein localises to the cytoplasm. The catalysed reaction is 5-[(5-phospho-1-deoxy-D-ribulos-1-ylimino)methylamino]-1-(5-phospho-beta-D-ribosyl)imidazole-4-carboxamide + L-glutamine = D-erythro-1-(imidazol-4-yl)glycerol 3-phosphate + 5-amino-1-(5-phospho-beta-D-ribosyl)imidazole-4-carboxamide + L-glutamate + H(+). It participates in amino-acid biosynthesis; L-histidine biosynthesis; L-histidine from 5-phospho-alpha-D-ribose 1-diphosphate: step 5/9. In terms of biological role, IGPS catalyzes the conversion of PRFAR and glutamine to IGP, AICAR and glutamate. The HisF subunit catalyzes the cyclization activity that produces IGP and AICAR from PRFAR using the ammonia provided by the HisH subunit. This chain is Imidazole glycerol phosphate synthase subunit HisF, found in Symbiobacterium thermophilum (strain DSM 24528 / JCM 14929 / IAM 14863 / T).